The primary structure comprises 455 residues: Bifunctional protein GlmU (455 aa).

The tract at residues 1–226 (MIAVAILAAG…YQEILGINDR (226 aa)) is pyrophosphorylase. UDP-N-acetyl-alpha-D-glucosamine contacts are provided by residues 7–10 (LAAG), K21, Q73, and 78–79 (GT). Mg(2+) is bound at residue D103. UDP-N-acetyl-alpha-D-glucosamine-binding residues include G140, E155, N170, and N224. N224 contacts Mg(2+). The interval 227–247 (KQLATAYKILQDRIKDDWLVA) is linker. The N-acetyltransferase stretch occupies residues 248–455 (GVTIMDPDSI…RPISSKQTEK (208 aa)). UDP-N-acetyl-alpha-D-glucosamine-binding residues include R329 and K347. H359 serves as the catalytic Proton acceptor. UDP-N-acetyl-alpha-D-glucosamine-binding residues include Y362 and N373. Acetyl-CoA is bound by residues A376, 382–383 (NY), A419, and R436.

The protein in the N-terminal section; belongs to the N-acetylglucosamine-1-phosphate uridyltransferase family. It in the C-terminal section; belongs to the transferase hexapeptide repeat family. In terms of assembly, homotrimer. Mg(2+) is required as a cofactor.

The protein resides in the cytoplasm. It catalyses the reaction alpha-D-glucosamine 1-phosphate + acetyl-CoA = N-acetyl-alpha-D-glucosamine 1-phosphate + CoA + H(+). The enzyme catalyses N-acetyl-alpha-D-glucosamine 1-phosphate + UTP + H(+) = UDP-N-acetyl-alpha-D-glucosamine + diphosphate. It participates in nucleotide-sugar biosynthesis; UDP-N-acetyl-alpha-D-glucosamine biosynthesis; N-acetyl-alpha-D-glucosamine 1-phosphate from alpha-D-glucosamine 6-phosphate (route II): step 2/2. Its pathway is nucleotide-sugar biosynthesis; UDP-N-acetyl-alpha-D-glucosamine biosynthesis; UDP-N-acetyl-alpha-D-glucosamine from N-acetyl-alpha-D-glucosamine 1-phosphate: step 1/1. It functions in the pathway bacterial outer membrane biogenesis; LPS lipid A biosynthesis. Functionally, catalyzes the last two sequential reactions in the de novo biosynthetic pathway for UDP-N-acetylglucosamine (UDP-GlcNAc). The C-terminal domain catalyzes the transfer of acetyl group from acetyl coenzyme A to glucosamine-1-phosphate (GlcN-1-P) to produce N-acetylglucosamine-1-phosphate (GlcNAc-1-P), which is converted into UDP-GlcNAc by the transfer of uridine 5-monophosphate (from uridine 5-triphosphate), a reaction catalyzed by the N-terminal domain. This is Bifunctional protein GlmU from Acaryochloris marina (strain MBIC 11017).